A 251-amino-acid chain; its full sequence is CDP-diacylglycerol pyrophosphatase (251 aa).

Residues 4–24 form a helical membrane-spanning segment; that stretch reads AGLLFLVMIVIAVVATGIGYW.

The protein belongs to the Cdh family.

It localises to the cell inner membrane. The enzyme catalyses a CDP-1,2-diacyl-sn-glycerol + H2O = a 1,2-diacyl-sn-glycero-3-phosphate + CMP + 2 H(+). It participates in phospholipid metabolism; CDP-diacylglycerol degradation; phosphatidate from CDP-diacylglycerol: step 1/1. The sequence is that of CDP-diacylglycerol pyrophosphatase from Escherichia coli O45:K1 (strain S88 / ExPEC).